Consider the following 1336-residue polypeptide: Zinc finger protein 335 (1336 aa).

2 disordered regions span residues 1–108 and 199–222; these read MEEN…LVHS and PTST…LAQP. Composition is skewed to low complexity over residues 31–45 and 54–65; these read TSEA…AATA and SGVGQSSDSGSR. Residues 247–270 form a C2H2-type 1 zinc finger; it reads FKCKMCQYRSSTKATLLRHMRERH. Disordered regions lie at residues 282–398 and 415–442; these read AGKR…PSSS and VSQS…GRPS. Over residues 300–331 the composition is skewed to acidic residues; sequence EEGPEEEEEDDDIVDAGAIDDLEEDSDYNPAE. Residues 339-349 are compositionally biased toward low complexity; it reads LRLQRPTPSTL. Residues 350-361 are compositionally biased toward basic residues; sequence RPRRRPGRPRKL. The span at 362-373 shows a compositional bias: basic and acidic residues; sequence PRLETSDLHDGI. The span at 378 to 387 shows a compositional bias: polar residues; that stretch reads VSSQSTQSPP. 8 C2H2-type zinc fingers span residues 465 to 487, 495 to 517, 523 to 545, 562 to 584, 590 to 612, 621 to 643, 649 to 672, and 678 to 701; these read YLCR…VNSH, FKCL…MFNH, YKCD…AAVH, FPCP…MKTH, HMCD…LLTH, FKCE…QLSH, FKCS…AVKH, and FACE…RCRH. 2 disordered regions span residues 732–766 and 961–1013; these read LKQQ…TPPL and LQCG…AAAS. Over residues 752–766 the composition is skewed to pro residues; sequence PQEPAPFQPPETPPL. Phosphoserine occurs at positions 975 and 1006. 4 consecutive C2H2-type zinc fingers follow at residues 1018–1040, 1046–1068, 1074–1096, and 1102–1125; these read FSCK…KRAH, FKCP…MAQH, HQCN…MLTH, and FSCH…QRLH. Lys1021 is covalently cross-linked (Glycyl lysine isopeptide (Lys-Gly) (interchain with G-Cter in SUMO2)). Ser1148 carries the phosphoserine modification.

This sequence belongs to the krueppel C2H2-type zinc-finger protein family. As to quaternary structure, interacts with NCOA6; may enhance ligand-dependent transcriptional activation by nuclear hormone receptors. Interacts with CNOT6. Interacts with CNOT9; the interaction is direct. Component of a nuclear receptor-mediated transcription complex composed of at least ZNF335, CCAR2 and EMSY; the complex stimulates the transcription of nuclear receptor target genes such as SOX9 and HOXA1. Within the complex interacts with EMSY and interacts (via C-terminus) with CCAR2. Interacts with members of histone H3'Lys4'(H3K4) methyltransferase complexes ASH2L, CXXC1, KMT2A/MLL1, RBBP5, SETD1A and WDR5. Component of a histone methylation complex composed of at least ZNF335, RBBP5, ASH2L and WDR5; the complex may have histone H3-specific methyltransferase activity, however does not have specificity for 'Lys-4' of histone H3. Interacts with RBBP5 and WDR5. Interacts with ASHL2. Components of this complex may associate with components of the ZNF335-CCAR2-EMSY nuclear receptor-mediated transcription complex to form a complex at least composed of ZNF335, HCFC1, CCAR2, EMSY, MKI67, RBBP5, ASH2L and WDR5. Within this complex also interacts with HCFC1 and MKI67.

It is found in the nucleus. Component or associated component of some histone methyltransferase complexes may regulate transcription through recruitment of those complexes on gene promoters. Enhances ligand-dependent transcriptional activation by nuclear hormone receptors. Plays an important role in neural progenitor cell proliferation and self-renewal through the regulation of specific genes involved brain development, including REST. Also controls the expression of genes involved in somatic development and regulates, for instance, lymphoblast proliferation. The chain is Zinc finger protein 335 (Znf335) from Rattus norvegicus (Rat).